The chain runs to 93 residues: Small ribosomal subunit protein uS19 (93 aa).

This sequence belongs to the universal ribosomal protein uS19 family.

Its function is as follows. Protein S19 forms a complex with S13 that binds strongly to the 16S ribosomal RNA. This Leptospira interrogans serogroup Icterohaemorrhagiae serovar copenhageni (strain Fiocruz L1-130) protein is Small ribosomal subunit protein uS19.